The following is a 540-amino-acid chain: MMLRTTASRKIVLRRGLASINTGTTVASKKASHKFRNTLWTIALSATAFYAGGIIYSQKNDKFGDFFSNNVPFAEDLLETYEHYHDRPTLFLEDSWDGLKAKSNDLLSGLTGSSQTRRSNRENIEVKKILSLEPLNIETENSDPQLKEIIGSLNDLINSLNDSNLSIPESEFNSIKKSNQNMLTNLSQLNETLKEALSNYMIQRTSEVITELNTQYENSKREFEKNLQKNLLQEVDEFKENLTKQKDKELEEKLKANEELLQAKHANEVGLLSITQVKEFNKIIKDKIEKERNGRLAHLEEINSEVNDLSKSIDRSSKILSKNEALVQLTFQVDEIKSRINNNNLPDVNIDKELSRLKLLSNLLSTFNKKSCCDDGDCCSCKKGNKNEGKEGKISCKCKPKTNPPSLLSVALDELESTCSGKKILSNEQIYNRWNLLADDFKTASLLPPNSGILGQLTAKVFSLFLFTKTGNPSNATDFDSVYARVGDNLRVSNLNDAVEEVVSLKGWPHKVCESWIEDARRKLEVQRLVEILDCEIRTL.

The N-terminal 17 residues, 1–17 (MMLRTTASRKIVLRRGL), are a transit peptide targeting the mitochondrion. Over 18–37 (ASINTGTTVASKKASHKFRN) the chain is Mitochondrial matrix. Residues 38 to 57 (TLWTIALSATAFYAGGIIYS) traverse the membrane as a helical segment. Topologically, residues 58-540 (QKNDKFGDFF…EILDCEIRTL (483 aa)) are mitochondrial intermembrane. A coiled-coil region spans residues 173 to 268 (NSIKKSNQNM…ELLQAKHANE (96 aa)).

The protein belongs to the MICOS complex subunit Mic60 family. As to quaternary structure, component of the mitochondrial contact site and cristae organizing system (MICOS) complex, composed of at least MIC10, MIC12, MIC19, MIC26, MIC27 and MIC60. This complex was also known under the names MINOS or MitOS complex. Interacts with TOM22 and TOM40 in a MICOS-independent manner, resulting in coupling with the outer membrane. Interacts with MIA40, OM45 and POR1.

It is found in the mitochondrion inner membrane. Component of the MICOS complex, a large protein complex of the mitochondrial inner membrane that plays crucial roles in the maintenance of crista junctions, inner membrane architecture, and formation of contact sites to the outer membrane. Plays a role in keeping cristae membranes connected to the inner boundary membrane. Also promotes protein import via the mitochondrial intermembrane space assembly (MIA) pathway. This chain is MICOS complex subunit MIC60 (MIC60), found in Saccharomyces cerevisiae (strain ATCC 204508 / S288c) (Baker's yeast).